A 342-amino-acid chain; its full sequence is Oxygen-dependent coproporphyrinogen-III oxidase (342 aa).

Ser-98 serves as a coordination point for substrate. A divalent metal cation is bound by residues His-102 and His-112. The Proton donor role is filled by His-112. 114-116 contributes to the substrate binding site; the sequence is NYR. Residues His-146 and His-176 each contribute to the a divalent metal cation site. The tract at residues 266-301 is important for dimerization; that stretch reads YVEFNLVWDRGTIFGLQTNGRTESILMSLPPLARWE.

This sequence belongs to the aerobic coproporphyrinogen-III oxidase family. As to quaternary structure, homodimer. A divalent metal cation is required as a cofactor.

The protein localises to the cytoplasm. It carries out the reaction coproporphyrinogen III + O2 + 2 H(+) = protoporphyrinogen IX + 2 CO2 + 2 H2O. It functions in the pathway porphyrin-containing compound metabolism; protoporphyrin-IX biosynthesis; protoporphyrinogen-IX from coproporphyrinogen-III (O2 route): step 1/1. In terms of biological role, involved in the heme and chlorophyll biosynthesis. Catalyzes the aerobic oxidative decarboxylation of propionate groups of rings A and B of coproporphyrinogen-III to yield the vinyl groups in protoporphyrinogen-IX. The chain is Oxygen-dependent coproporphyrinogen-III oxidase from Prochlorococcus marinus (strain MIT 9515).